The sequence spans 343 residues: MKPPRLTDTTLRDGSHPMRHQFTRQQVATIVQALDRAGVPVIEVSHGDGLAGSSLQYGFSHTSEFDLIETARQHAERAKIAALMLPGIGTRQELKEAVARGVQVVRIATQCTEADISEQHFGLAKELGLETVGFLMMAHMRPPEELARQAKLMESYGADCVYIVDSAGAMLPQDAAARVQALKDTLSVQVGFHAHNNLGLGIANTLAALEAGADQIDGCLRGLGAGAGNAATELLAAVLDRLGLNPGLDVFSLMDAAEYVVAPIMPFQPFPDRDAITIGYAGVYSTFLLHAKRAGAQYNVDPREILVELGRRQAVAGQEDWIIDVALELSRRHQSSARKESRP.

Residues 4–254 (PRLTDTTLRD…NPGLDVFSLM (251 aa)) enclose the Pyruvate carboxyltransferase domain. Residue 12-13 (RD) participates in substrate binding. Mn(2+) is bound at residue D13. H16 serves as the catalytic Proton acceptor. Substrate is bound by residues S166 and H193. Mn(2+) is bound by residues H193 and H195. Residue Y284 participates in substrate binding.

It belongs to the 4-hydroxy-2-oxovalerate aldolase family.

It catalyses the reaction (S)-4-hydroxy-2-oxopentanoate = acetaldehyde + pyruvate. This Chloroflexus aurantiacus (strain ATCC 29364 / DSM 637 / Y-400-fl) protein is 4-hydroxy-2-oxovalerate aldolase.